The following is a 142-amino-acid chain: ATP synthase epsilon chain, chloroplastic (142 aa).

The protein belongs to the ATPase epsilon chain family. F-type ATPases have 2 components, CF(1) - the catalytic core - and CF(0) - the membrane proton channel. CF(1) has five subunits: alpha(3), beta(3), gamma(1), delta(1), epsilon(1). CF(0) has three main subunits: a, b and c.

The protein resides in the plastid. The protein localises to the chloroplast thylakoid membrane. Produces ATP from ADP in the presence of a proton gradient across the membrane. This chain is ATP synthase epsilon chain, chloroplastic, found in Ostreococcus tauri.